A 251-amino-acid chain; its full sequence is Imidazole glycerol phosphate synthase subunit HisF (251 aa).

Residues aspartate 11 and aspartate 130 contribute to the active site.

It belongs to the HisA/HisF family. As to quaternary structure, heterodimer of HisH and HisF.

Its subcellular location is the cytoplasm. The catalysed reaction is 5-[(5-phospho-1-deoxy-D-ribulos-1-ylimino)methylamino]-1-(5-phospho-beta-D-ribosyl)imidazole-4-carboxamide + L-glutamine = D-erythro-1-(imidazol-4-yl)glycerol 3-phosphate + 5-amino-1-(5-phospho-beta-D-ribosyl)imidazole-4-carboxamide + L-glutamate + H(+). It functions in the pathway amino-acid biosynthesis; L-histidine biosynthesis; L-histidine from 5-phospho-alpha-D-ribose 1-diphosphate: step 5/9. Its function is as follows. IGPS catalyzes the conversion of PRFAR and glutamine to IGP, AICAR and glutamate. The HisF subunit catalyzes the cyclization activity that produces IGP and AICAR from PRFAR using the ammonia provided by the HisH subunit. The polypeptide is Imidazole glycerol phosphate synthase subunit HisF (Flavobacterium psychrophilum (strain ATCC 49511 / DSM 21280 / CIP 103535 / JIP02/86)).